The sequence spans 370 residues: Alanine racemase (370 aa).

Lys36 acts as the Proton acceptor; specific for D-alanine in catalysis. Lys36 is subject to N6-(pyridoxal phosphate)lysine. Arg134 contributes to the substrate binding site. The Proton acceptor; specific for L-alanine role is filled by Tyr265. Met313 is a binding site for substrate.

It belongs to the alanine racemase family. Pyridoxal 5'-phosphate is required as a cofactor.

It catalyses the reaction L-alanine = D-alanine. The protein operates within amino-acid biosynthesis; D-alanine biosynthesis; D-alanine from L-alanine: step 1/1. In terms of biological role, catalyzes the interconversion of L-alanine and D-alanine. May also act on other amino acids. The polypeptide is Alanine racemase (alr) (Desulforamulus reducens (strain ATCC BAA-1160 / DSM 100696 / MI-1) (Desulfotomaculum reducens)).